A 242-amino-acid polypeptide reads, in one-letter code: Probable 2-phosphosulfolactate phosphatase (242 aa).

The protein belongs to the ComB family. The cofactor is Mg(2+).

It catalyses the reaction (2R)-O-phospho-3-sulfolactate + H2O = (2R)-3-sulfolactate + phosphate. The protein is Probable 2-phosphosulfolactate phosphatase of Synechococcus sp. (strain JA-3-3Ab) (Cyanobacteria bacterium Yellowstone A-Prime).